The following is a 233-amino-acid chain: Large ribosomal subunit protein uL1 (233 aa).

It belongs to the universal ribosomal protein uL1 family. In terms of assembly, part of the 50S ribosomal subunit.

In terms of biological role, binds directly to 23S rRNA. The L1 stalk is quite mobile in the ribosome, and is involved in E site tRNA release. Functionally, protein L1 is also a translational repressor protein, it controls the translation of the L11 operon by binding to its mRNA. The chain is Large ribosomal subunit protein uL1 from Shewanella piezotolerans (strain WP3 / JCM 13877).